The chain runs to 647 residues: A-type voltage-gated potassium channel KCND1 (647 aa).

Over 1–183 (MAAGLATWLP…RAFENPHTST (183 aa)) the chain is Cytoplasmic. The tract at residues 2–20 (AAGLATWLPFARAAAVGWL) is interaction with KCNIP1, KCNIP2, and other family members. The Zn(2+) site is built by histidine 104, cysteine 131, and cysteine 132. Positions 144 to 163 (AERLAEDEEAEQAGDGPALP) are disordered. Residues 184–205 (AALVFYYVTGFFIAVSVIANVV) form a helical membrane-spanning segment. Residues 206-230 (ETIPCRGSARRSSREQPCGERFPQA) are Extracellular-facing. The helical transmembrane segment at 231-252 (FFCMDTACVLIFTGEYLLRLFA) threads the bilayer. At 253–263 (APSRCRFLRSV) the chain is on the cytoplasmic side. Residues 264–284 (MSLIDVVAILPYYIGLLVPKN) traverse the membrane as a helical segment. The Extracellular segment spans residues 285 to 287 (DDV). Residues 288 to 308 (SGAFVTLRVFRVFRIFKFSRH) form a helical; Voltage-sensor membrane-spanning segment. The Cytoplasmic portion of the chain corresponds to 309–323 (SQGLRILGYTLKSCA). Positions 310–323 (QGLRILGYTLKSCA) are S4-S5 linker. The chain crosses the membrane as a helical span at residues 324–345 (SELGFLLFSLTMAIIIFATVMF). Topologically, residues 346–359 (YAEKGTNKTNFTSI) are extracellular. 2 N-linked (GlcNAc...) asparagine glycosylation sites follow: asparagine 352 and asparagine 355. An intramembrane region (helical) is located at residues 360–371 (PAAFWYTIVTMT). The Selectivity filter signature appears at 372–377 (TLGYGD). Residues 372 to 379 (TLGYGDMV) lie within the membrane without spanning it. Over 380-386 (PSTIAGK) the chain is Extracellular. A helical transmembrane segment spans residues 387–415 (IFGSICSLSGVLVIALPVPVIVSNFSRIY). Residues 416–647 (HQNQRADKRR…FPETVKISSL (232 aa)) lie on the Cytoplasmic side of the membrane. At serine 458 the chain carries Phosphoserine. Positions 474–489 (FEQQHHHLLHCLEKTT) are required for dendritic targeting. Low complexity predominate over residues 506–524 (VSPGGRTSRSTSVSSQPVG). A disordered region spans residues 506-531 (VSPGGRTSRSTSVSSQPVGPGSLLSS). Serine 555 is subject to Phosphoserine. The segment at 601–634 (IPTPPANTPDESQPSSPGGGGRAGSTLRNSSLGT) is disordered.

The protein belongs to the potassium channel family. D (Shal) (TC 1.A.1.2) subfamily. Kv4.1/KCND1 sub-subfamily. As to quaternary structure, component of heteromultimeric potassium channels. Identified in potassium channel complexes containing KCND1, KCND2, KCND3, KCNIP1, KCNIP2, KCNIP3, KCNIP4, DPP6 and DPP10. In terms of tissue distribution, widely expressed. Highly expressed in brain, in particular in cerebellum and thalamus; detected at lower levels in the other parts of the brain.

Its subcellular location is the cell membrane. It carries out the reaction K(+)(in) = K(+)(out). Functionally, A-type voltage-gated potassium channel that mediates transmembrane potassium transport in excitable membranes in the brain. Mediates A-type current I(SA) in suprachiasmatic nucleus (SCN) neurons. Exhibits a low-threshold A-type current with a hyperpolarized steady-state inactivation midpoint and the recovery process was steeply voltage-dependent, with recovery being markedly faster at more negative potentials. May regulates repetitive firing rates in the suprachiasmatic nucleus (SCN) neurons and circadian rhythms in neuronal excitability and behavior. Contributes to the regulation of the circadian rhythm of action potential firing in suprachiasmatic nucleus neurons, which regulates the circadian rhythm of locomotor activity. The regulatory subunit KCNIP1 modulates the kinetics of channel inactivation, increases the current amplitudes and accelerates recovery from inactivation, shifts activation in a depolarizing direction. The regulatory subunit DPP10 decreases the voltage sensitivity of the inactivation channel gating. This is A-type voltage-gated potassium channel KCND1 from Homo sapiens (Human).